A 254-amino-acid chain; its full sequence is Flavin-dependent thymidylate synthase (254 aa).

A ThyX domain is found at 7–237 (LRVQLIAKTE…PAVFADFEIT (231 aa)). Residues 92 to 95 (ELIR), 103 to 107 (QLSQR), and histidine 176 contribute to the dUMP site. Residues 95-97 (RHR) and glutamine 103 contribute to the FAD site. The ThyX motif motif lies at 95-105 (RHRHFSYSQLS). Residues 192-194 (NYR) and histidine 198 contribute to the FAD site. Arginine 203 is a binding site for dUMP. Arginine 203 (involved in ionization of N3 of dUMP, leading to its activation) is an active-site residue.

It belongs to the thymidylate synthase ThyX family. As to quaternary structure, homotetramer. FAD is required as a cofactor.

The catalysed reaction is dUMP + (6R)-5,10-methylene-5,6,7,8-tetrahydrofolate + NADPH + H(+) = dTMP + (6S)-5,6,7,8-tetrahydrofolate + NADP(+). It participates in pyrimidine metabolism; dTTP biosynthesis. Catalyzes the reductive methylation of 2'-deoxyuridine-5'-monophosphate (dUMP) to 2'-deoxythymidine-5'-monophosphate (dTMP) while utilizing 5,10-methylenetetrahydrofolate (mTHF) as the methyl donor, and NADPH and FADH(2) as the reductant. This Mycobacterium leprae (strain Br4923) protein is Flavin-dependent thymidylate synthase.